The following is a 446-amino-acid chain: Adenylosuccinate synthetase (446 aa).

GTP-binding positions include 20-26 (GDEGKGK) and 48-50 (GHT). Aspartate 21 (proton acceptor) is an active-site residue. Residues aspartate 21 and glycine 48 each coordinate Mg(2+). IMP is bound by residues 21–24 (DEGK), 46–49 (NAGH), threonine 137, arginine 151, glutamine 232, threonine 247, and arginine 319. Histidine 49 functions as the Proton donor in the catalytic mechanism. 315-321 (SVTGRPR) contacts substrate. GTP contacts are provided by residues arginine 321, 347-349 (KLD), and 429-431 (STG).

It belongs to the adenylosuccinate synthetase family. As to quaternary structure, homodimer. Mg(2+) serves as cofactor.

It localises to the cytoplasm. It carries out the reaction IMP + L-aspartate + GTP = N(6)-(1,2-dicarboxyethyl)-AMP + GDP + phosphate + 2 H(+). It participates in purine metabolism; AMP biosynthesis via de novo pathway; AMP from IMP: step 1/2. Plays an important role in the de novo pathway of purine nucleotide biosynthesis. Catalyzes the first committed step in the biosynthesis of AMP from IMP. The polypeptide is Adenylosuccinate synthetase (Polynucleobacter asymbioticus (strain DSM 18221 / CIP 109841 / QLW-P1DMWA-1) (Polynucleobacter necessarius subsp. asymbioticus)).